Here is a 184-residue protein sequence, read N- to C-terminus: Peptidoglycan-recognition protein SC2 (184 aa).

Positions 1–20 (MANKALILLAVLFCAQAVLG) are cleaved as a signal peptide. Positions 45-169 (SYAVIHHTAG…RQVGSTECPG (125 aa)) constitute an N-acetylmuramoyl-L-alanine amidase domain. His50 contributes to the Zn(2+) binding site. Cys57 and Cys63 are joined by a disulfide. His159 and Cys167 together coordinate Zn(2+).

This sequence belongs to the N-acetylmuramoyl-L-alanine amidase 2 family. It depends on Zn(2+) as a cofactor. As to expression, constitutively expressed at high level in gut, in addition to the induced expression in fat body.

The protein resides in the secreted. It carries out the reaction Hydrolyzes the link between N-acetylmuramoyl residues and L-amino acid residues in certain cell-wall glycopeptides.. N-acetylmuramyl-L-alanine amidase involved in innate immunity by degrading bacterial peptidoglycans (PGN). Probably plays a scavenger role by digesting biologically active PGN into biologically inactive fragments. Has no direct bacteriolytic activity. This is Peptidoglycan-recognition protein SC2 (PGRP-SC2) from Drosophila melanogaster (Fruit fly).